A 334-amino-acid polypeptide reads, in one-letter code: MALRWGIVSVGLISSDFTAVLQTLPRSEHQVVAVAARDLSRAKEFAQKHDIPKAYGSYEELAKDPSVEVAYIGTQHPQHKAAVMLCLAAGKAVLCEKPTGVNAAEVREMVAEARSRALFLMEAIWTRFFPASEALRSVLAQGTLGDLRVARAEFGKNLIHVPRAVDRAQAGGALLDIGIYCVQFTSMVFGGQKPEKISVVGRRHETGVDDTVTVLLQYPGEVHGSFTCSITVQLSNTASVSGTKGMVQLLNPCWCPTELVVKGEHKEFPLPPVPKDCNFDNGAGMSYEAKHVWECLRKGMKESPVIPLSESELLADILEEVRKAIGVTFPQDKR.

This sequence belongs to the Gfo/Idh/MocA family. Homodimer. In terms of tissue distribution, small intestine.

It carries out the reaction (1R,2R)-1,2-dihydrobenzene-1,2-diol + NADP(+) = catechol + NADPH + H(+). The enzyme catalyses D-xylose + NADP(+) = D-xylono-1,5-lactone + NADPH + H(+). In Homo sapiens (Human), this protein is Trans-1,2-dihydrobenzene-1,2-diol dehydrogenase (DHDH).